Consider the following 228-residue polypeptide: PKHD-type hydroxylase XCV3086 (228 aa).

The 103-residue stretch at Arg78–Ser180 folds into the Fe2OG dioxygenase domain. Fe cation is bound by residues His96, Asp98, and His161. A 2-oxoglutarate-binding site is contributed by Arg171.

It depends on Fe(2+) as a cofactor. L-ascorbate serves as cofactor.

This Xanthomonas euvesicatoria pv. vesicatoria (strain 85-10) (Xanthomonas campestris pv. vesicatoria) protein is PKHD-type hydroxylase XCV3086.